The sequence spans 198 residues: Putative pseudouridine methyltransferase (198 aa).

S-adenosyl-L-methionine contacts are provided by Met132 and Cys186.

It belongs to the methyltransferase superfamily. TrmY family.

It is found in the cytoplasm. In Shewanella baltica (strain OS185), this protein is Putative pseudouridine methyltransferase.